A 54-amino-acid chain; its full sequence is MPQLNPKPWFMILFFSWVIFLTIIPTKIINHIQPNDPTQVDAKEHKNDTWNWPW.

A helical membrane pass occupies residues 9-29 (WFMILFFSWVIFLTIIPTKII). Residues 35–54 (NDPTQVDAKEHKNDTWNWPW) are disordered.

This sequence belongs to the ATPase protein 8 family. In terms of assembly, component of the ATP synthase complex composed at least of ATP5F1A/subunit alpha, ATP5F1B/subunit beta, ATP5MC1/subunit c (homooctomer), MT-ATP6/subunit a, MT-ATP8/subunit 8, ATP5ME/subunit e, ATP5MF/subunit f, ATP5MG/subunit g, ATP5MK/subunit k, ATP5MJ/subunit j, ATP5F1C/subunit gamma, ATP5F1D/subunit delta, ATP5F1E/subunit epsilon, ATP5PF/subunit F6, ATP5PB/subunit b, ATP5PD/subunit d, ATP5PO/subunit OSCP. ATP synthase complex consists of a soluble F(1) head domain (subunits alpha(3) and beta(3)) - the catalytic core - and a membrane F(0) domain - the membrane proton channel (subunits c, a, 8, e, f, g, k and j). These two domains are linked by a central stalk (subunits gamma, delta, and epsilon) rotating inside the F1 region and a stationary peripheral stalk (subunits F6, b, d, and OSCP).

Its subcellular location is the mitochondrion membrane. Its function is as follows. Subunit 8, of the mitochondrial membrane ATP synthase complex (F(1)F(0) ATP synthase or Complex V) that produces ATP from ADP in the presence of a proton gradient across the membrane which is generated by electron transport complexes of the respiratory chain. ATP synthase complex consist of a soluble F(1) head domain - the catalytic core - and a membrane F(1) domain - the membrane proton channel. These two domains are linked by a central stalk rotating inside the F(1) region and a stationary peripheral stalk. During catalysis, ATP synthesis in the catalytic domain of F(1) is coupled via a rotary mechanism of the central stalk subunits to proton translocation. In vivo, can only synthesize ATP although its ATP hydrolase activity can be activated artificially in vitro. Part of the complex F(0) domain. In Danio rerio (Zebrafish), this protein is ATP synthase F(0) complex subunit 8.